The primary structure comprises 360 residues: Protein Wnt-2 (360 aa).

An N-terminal signal peptide occupies residues Met-1–Leu-37. 11 cysteine pairs are disulfide-bonded: Cys-80/Cys-91, Cys-130/Cys-138, Cys-140/Cys-158, Cys-213/Cys-227, Cys-215/Cys-222, Cys-289/Cys-320, Cys-305/Cys-315, Cys-319/Cys-359, Cys-335/Cys-350, Cys-337/Cys-347, and Cys-342/Cys-343. Asn-90 carries N-linked (GlcNAc...) asparagine glycosylation. Ser-219 is lipidated: O-palmitoleoyl serine; by mom-1. Asn-352 carries an N-linked (GlcNAc...) asparagine glycan.

Belongs to the Wnt family. Post-translationally, palmitoleoylation is required for efficient binding to frizzled receptors. Depalmitoleoylation leads to Wnt signaling pathway inhibition. As to expression, expressed in intestine, pharynx, anterior body wall muscle, vulva, some pharyngeal neurons and SMD head neurons. Expressed along the boundary between the intestine and muscle or hypodermis, but is also expressed in the hypodermis in cells including seam cells.

It is found in the secreted. It localises to the extracellular space. The protein localises to the extracellular matrix. Functionally, ligand for members of the frizzled family of seven transmembrane receptors. Probable developmental protein. May be a signaling molecule which affects the development of discrete regions of tissues. Is likely to signal over only few cell diameters. Involved in the correct positioning of the developing nerve ring and in axon guidance of SIA and SIB neurons, probably by binding to tyrosine kinase receptor cam-1. In addition, regulates the positioning of some head neuronal cells, muscle arms associated with the nerve ring and the excretory pore. Together with Wnt ligand cwn-1, regulates the migration of CAN, ALM, BDU and HSN neurons during embryogenesis, the migration of QL and QR neuroblast descendants during larval development, and polarity of ALM neurons. May act through the wnt receptor cfz-2 to regulate QR neuroblast descendant migration, and to direct ALM migration. Also plays a role in axon growth and guidance in HSN and male CP neurons. In addition, together with wnt ligand cwn-1, negatively regulates developmental neurite pruning of AIM neurons probably by acting as a ligand for receptor tyrosine kinase cam-1. Through the cam-1 receptor also probably regulates the outgrowth of neurites from RME GABAergic motor neurons. May act redundantly with other Wnt ligands such as cwn-1 and mom-2 to control seam cell polarity. In Caenorhabditis elegans, this protein is Protein Wnt-2.